A 656-amino-acid chain; its full sequence is uncharacterized protein (656 aa).

The next 3 helical transmembrane spans lie at 7 to 27, 40 to 60, and 210 to 230; these read QQVL…LNHL, LMAM…FWTL, and AVFI…AFTI. Residues 231–280 enclose the HAMP domain; the sequence is TRPIRELLTGVKNIASGDFYQRIDLPFGGELGALIFNFNEMAERLEKYEQ. A PAS domain is found at 289-359; that stretch reads EKAKLETLVS…PILNDIIRKN (71 aa). Residues 424–654 form the Histidine kinase domain; the sequence is NVSHELRTPL…CFFFDLMIAK (231 aa). Position 427 is a phosphohistidine; by autocatalysis (His427).

The protein resides in the plastid. Its subcellular location is the chloroplast membrane. It catalyses the reaction ATP + protein L-histidine = ADP + protein N-phospho-L-histidine.. This is an uncharacterized protein from Porphyra purpurea (Red seaweed).